The sequence spans 137 residues: MDTKTQSLPNAHTQPHSNSGPQSHACNQCSCSHHCQNCSQSCDRSQSCSRSRSSSQSPTGHRSLPGHQSQSLSPSPSPRHRKRAMHSHRCPSRPGTRSCSHSKKRKNVEGKANKRKGIKRSQQVYKTKRRSSGRKYN.

The segment covering 1-21 (MDTKTQSLPNAHTQPHSNSGP) has biased composition (polar residues). The tract at residues 1-137 (MDTKTQSLPN…KRRSSGRKYN (137 aa)) is disordered. Zn(2+) contacts are provided by histidine 12, histidine 16, histidine 24, cysteine 29, cysteine 31, cysteine 35, and cysteine 38. Residues 22-74 (QSHACNQCSCSHHCQNCSQSCDRSQSCSRSRSSSQSPTGHRSLPGHQSQSLSP) show a composition bias toward low complexity. The segment covering 78–91 (PRHRKRAMHSHRCP) has biased composition (basic residues). The Nuclear localization signal signature appears at 110–118 (GKANKRKGI). Over residues 126 to 137 (KTKRRSSGRKYN) the composition is skewed to basic residues. At serine 132 the chain carries Phosphoserine.

The protein belongs to the nuclear transition protein 2 family. Testis. Expression is restricted to haploid germ cells.

It is found in the nucleus. Its subcellular location is the nucleolus. The protein resides in the chromosome. Plays a key role in the replacement of histones to protamine in the elongating spermatids of mammals. In condensing spermatids, loaded onto the nucleosomes, where it promotes the recruitment and processing of protamines, which are responsible for histone eviction. The chain is Nuclear transition protein 2 (TNP2) from Sus scrofa (Pig).